We begin with the raw amino-acid sequence, 219 residues long: Thymidylate kinase (219 aa).

7–14 (GIDGAGKS) contributes to the ATP binding site.

It belongs to the thymidylate kinase family.

It carries out the reaction dTMP + ATP = dTDP + ADP. Its function is as follows. Phosphorylation of dTMP to form dTDP in both de novo and salvage pathways of dTTP synthesis. The polypeptide is Thymidylate kinase (Chlorobium limicola (strain DSM 245 / NBRC 103803 / 6330)).